The following is a 333-amino-acid chain: uncharacterized protein (333 aa).

The signal sequence occupies residues 1 to 16; it reads MRPFLMILSVTYIASA. Residue Asn-204 is glycosylated (N-linked (GlcNAc...) asparagine).

This is an uncharacterized protein from Encephalitozoon cuniculi (strain GB-M1) (Microsporidian parasite).